A 298-amino-acid chain; its full sequence is Developmental pluripotency-associated protein 2 (298 aa).

A disordered region spans residues 36–61 (NMEQMEPSVSSTSDVKLEKPKKYNPG). Positions 92–126 (INKVCRDTLRDWCQQLGLSTNGKKIEVYLRLHRHA) constitute an SAP domain.

Interacts with DPPA4. Expressed in embryonic stem cells. No expression is seen in 5 months embryo, mesenchymal stem cells, embryonic fibrocytes and adult tissues.

It is found in the nucleus. Its function is as follows. Binds to target gene promoters, including NKX2-5 and SYCE1, but not GATA4, and may be involved in the maintenance of the active epigenetic status of these genes. The polypeptide is Developmental pluripotency-associated protein 2 (DPPA2) (Homo sapiens (Human)).